A 147-amino-acid polypeptide reads, in one-letter code: Ribosomal RNA large subunit methyltransferase H (147 aa).

S-adenosyl-L-methionine-binding positions include Leu66, Gly95, and 114 to 119 (LSELTF).

The protein belongs to the RNA methyltransferase RlmH family. As to quaternary structure, homodimer.

It localises to the cytoplasm. The enzyme catalyses pseudouridine(1915) in 23S rRNA + S-adenosyl-L-methionine = N(3)-methylpseudouridine(1915) in 23S rRNA + S-adenosyl-L-homocysteine + H(+). Functionally, specifically methylates the pseudouridine at position 1915 (m3Psi1915) in 23S rRNA. In Synechococcus sp. (strain RCC307), this protein is Ribosomal RNA large subunit methyltransferase H.